A 268-amino-acid polypeptide reads, in one-letter code: Energy-coupling factor transporter transmembrane protein EcfT (268 aa).

Helical transmembrane passes span 26–46 (ILAV…LSYG), 47–67 (ILIG…GLLL), 73–93 (LWII…GEAL), 116–136 (LVLL…IVLT), 151–171 (VPAH…PTLL), and 246–266 (ALTG…RWGI).

This sequence belongs to the energy-coupling factor EcfT family. Forms a stable energy-coupling factor (ECF) transporter complex composed of 2 membrane-embedded substrate-binding proteins (S component), 2 ATP-binding proteins (A component) and 2 transmembrane proteins (T component). May be able to interact with more than 1 S component at a time.

The protein resides in the cell membrane. Its function is as follows. Transmembrane (T) component of an energy-coupling factor (ECF) ABC-transporter complex. Unlike classic ABC transporters this ECF transporter provides the energy necessary to transport a number of different substrates. In Acidaminococcus fermentans (strain ATCC 25085 / DSM 20731 / CCUG 9996 / CIP 106432 / VR4), this protein is Energy-coupling factor transporter transmembrane protein EcfT.